The chain runs to 120 residues: uncharacterized protein (120 aa).

Positions 3–120 (IRYKKAFEKI…EKCEICHGSE (118 aa)) constitute an N-acetyltransferase domain.

This is an uncharacterized protein from Bacillus methanolicus.